A 234-amino-acid polypeptide reads, in one-letter code: MDKIYAIIPVNQFANAKTRLSPFLTPEERRDLLKAMLKDITDTLKPIVDKVVIISRDEEVLAYAEELELTTIVEEEYKKSKAVNSSDDNPLNKALKQAMKWSRKKTRKVIILPSDIPLIGKTNVKLLIDQAKNFDFIIVPSKGGGTNTLIIKPLAIDMKFEGFSFNKHIEEAKRKKLVPIVHDSFYMALDVNTTEDLGEIMLHGNGTETKKYLESLGIKVESSHDHERLKVTRD.

It belongs to the CofC family. In terms of assembly, homodimer.

The catalysed reaction is (2S)-2-phospholactate + GTP + H(+) = (2S)-lactyl-2-diphospho-5'-guanosine + diphosphate. It functions in the pathway cofactor biosynthesis; coenzyme F420 biosynthesis. Its function is as follows. Guanylyltransferase that catalyzes the activation of (2S)-2-phospholactate (2-PL) as (2S)-lactyl-2-diphospho-5'-guanosine, via the condensation of 2-PL with GTP. It is involved in the biosynthesis of coenzyme F420, a hydride carrier cofactor. The polypeptide is 2-phospho-L-lactate guanylyltransferase (Methanobrevibacter ruminantium (strain ATCC 35063 / DSM 1093 / JCM 13430 / OCM 146 / M1) (Methanobacterium ruminantium)).